The following is a 229-amino-acid chain: Ribonuclease 3 (229 aa).

The region spanning 5 to 127 (LSRLERKLGH…LIGAIYLDAG (123 aa)) is the RNase III domain. Residue glutamate 40 coordinates Mg(2+). Residue aspartate 44 is part of the active site. Mg(2+) contacts are provided by aspartate 113 and glutamate 116. The active site involves glutamate 116. The 71-residue stretch at 154-224 (DPKTRLQEFL…AAAALIALGV (71 aa)) folds into the DRBM domain.

The protein belongs to the ribonuclease III family. Homodimer. Requires Mg(2+) as cofactor.

Its subcellular location is the cytoplasm. It catalyses the reaction Endonucleolytic cleavage to 5'-phosphomonoester.. Digests double-stranded RNA. Involved in the processing of primary rRNA transcript to yield the immediate precursors to the large and small rRNAs (23S and 16S). Processes some mRNAs, and tRNAs when they are encoded in the rRNA operon. Processes pre-crRNA and tracrRNA of type II CRISPR loci if present in the organism. This is Ribonuclease 3 from Ectopseudomonas mendocina (strain ymp) (Pseudomonas mendocina).